We begin with the raw amino-acid sequence, 218 residues long: Cytochrome b6 (218 aa).

A helical membrane pass occupies residues 35-55 (IFYCLGGITLVCFLIQFATGF). Cys-38 serves as a coordination point for heme c. His-89 and His-103 together coordinate heme b. Transmembrane regions (helical) follow at residues 93-113 (ASMM…TGGF), 119-139 (LTWV…VTGY), and 189-209 (LHTF…FLMI). Residues His-190 and His-205 each coordinate heme b.

Belongs to the cytochrome b family. PetB subfamily. In terms of assembly, the 4 large subunits of the cytochrome b6-f complex are cytochrome b6, subunit IV (17 kDa polypeptide, PetD), cytochrome f and the Rieske protein, while the 4 small subunits are PetG, PetL, PetM and PetN. The complex functions as a dimer. Heme b serves as cofactor. Heme c is required as a cofactor.

The protein resides in the cellular thylakoid membrane. Functionally, component of the cytochrome b6-f complex, which mediates electron transfer between photosystem II (PSII) and photosystem I (PSI), cyclic electron flow around PSI, and state transitions. In Synechococcus sp. (strain CC9311), this protein is Cytochrome b6.